Consider the following 459-residue polypeptide: Putrescine aminotransferase (459 aa).

Pyridoxal 5'-phosphate contacts are provided by residues 150 to 151 (GT) and Q274. An N6-(pyridoxal phosphate)lysine modification is found at K300. A pyridoxal 5'-phosphate-binding site is contributed by T332.

The protein belongs to the class-III pyridoxal-phosphate-dependent aminotransferase family. Putrescine aminotransferase subfamily. Pyridoxal 5'-phosphate is required as a cofactor.

It carries out the reaction an alkane-alpha,omega-diamine + 2-oxoglutarate = an omega-aminoaldehyde + L-glutamate. The catalysed reaction is putrescine + 2-oxoglutarate = 1-pyrroline + L-glutamate + H2O. The enzyme catalyses cadaverine + 2-oxoglutarate = 5-aminopentanal + L-glutamate. It participates in amine and polyamine degradation; putrescine degradation; 4-aminobutanal from putrescine (transaminase route): step 1/1. Its function is as follows. Catalyzes the aminotransferase reaction from putrescine to 2-oxoglutarate, leading to glutamate and 4-aminobutanal, which spontaneously cyclizes to form 1-pyrroline. This is the first step in one of two pathways for putrescine degradation, where putrescine is converted into 4-aminobutanoate (gamma-aminobutyrate or GABA) via 4-aminobutanal. Also functions as a cadaverine transaminase in a a L-lysine degradation pathway to succinate that proceeds via cadaverine, glutarate and L-2-hydroxyglutarate. The polypeptide is Putrescine aminotransferase (Shigella boydii serotype 4 (strain Sb227)).